The sequence spans 303 residues: MTWLQNITKESKIWIVNYACAIDYYVDLNKQKNSVLIPGGKGINVAIVMKSLGFDPTVITFLGQPTKNLFLELVKPYDLNIVSFISETKTRINLKLLKDEKTTEINDLSPLITDANLTELLTFLKANVKNNDLVIINGRFKFEALEKVLNLVFTLTENVVIDVDESKMLTLLNQSKPLVMKPNIDEFQTMINTFFHDQQSLIAAIKKFHYCKLLLLSDGDKGAYLFDQNKLLFVSSITPKQVVSTTGAGDTLLAVFLANLILKVDLKTALIKATNYASATISKLGVVDSKDKISVITPKSYYL.

ATP contacts are provided by residues 217 to 222 (SDGDKG) and 249 to 250 (GD). The Proton acceptor role is filled by aspartate 250.

It belongs to the carbohydrate kinase PfkB family.

The catalysed reaction is beta-D-fructose 1-phosphate + ATP = beta-D-fructose 1,6-bisphosphate + ADP + H(+). Its function is as follows. Catalyzes the ATP-dependent phosphorylation of fructose-l-phosphate to fructose-l,6-bisphosphate. The protein is Putative 1-phosphofructokinase (fruK) of Mycoplasma genitalium (strain ATCC 33530 / DSM 19775 / NCTC 10195 / G37) (Mycoplasmoides genitalium).